The sequence spans 483 residues: 5-hydroxytryptamine receptor 3A (483 aa).

Positions 1-23 (MPLCIPQVLLALFLSVLIAQGEG) are cleaved as a signal peptide. Topologically, residues 24–246 (SRRRATQAHS…MKFYVVIRRR (223 aa)) are extracellular. N-linked (GlcNAc...) asparagine glycans are attached at residues N109, N175, and N191. A disulfide bridge connects residues C162 and C176. The chain crosses the membrane as a helical span at residues 247 to 273 (PLFYAVSLLLPSIFLMVVDIVGFCLPP). Residues 274 to 278 (DSGER) lie on the Cytoplasmic side of the membrane. Residues 279-297 (VSFKITLLLGYSVFLIIVS) form a helical membrane-spanning segment. Residues 298 to 307 (DTLPATAIGT) lie on the Extracellular side of the membrane. Residues 308-326 (PLIGVYFVVCMALLVISLA) traverse the membrane as a helical segment. The Cytoplasmic segment spans residues 327–460 (ETIFIVQLVH…GYVLDRLLFR (134 aa)). Residues 393 to 414 (VGSPQDLEKTSRSRDSPLPPPR) are disordered. Residues 398–407 (DLEKTSRSRD) show a composition bias toward basic and acidic residues. Residues 419 to 455 (AVRGLLQELSSIRHSLEKRDEMREVARDWLRVGYVLD) are HA-stretch; determines single-channel conductance in 5-HT3 receptors. A helical membrane pass occupies residues 461 to 480 (IYLLAVLAYSITLVTLWSIW). At 481–483 (HYS) the chain is on the extracellular side.

Belongs to the ligand-gated ion channel (TC 1.A.9) family. 5-hydroxytryptamine receptor (TC 1.A.9.2) subfamily. HTR3A sub-subfamily. In terms of assembly, forms homopentameric as well as heteropentameric serotonin-activated cation-selective channel complexes with HTR3B or HTR3C or HTR3D or HTR3E. The homomeric complex is functional but exhibits low conductance with modified voltage dependence, and decreased agonist and antagonist affinity. Heteropentameric complexes display properties which resemble that of neuronal serotonin-activated channels in vivo. Interacts with RIC3. In terms of tissue distribution, expressed in central and peripheral neurons.

It localises to the postsynaptic cell membrane. Its subcellular location is the cell membrane. The catalysed reaction is Na(+)(in) = Na(+)(out). The enzyme catalyses K(+)(in) = K(+)(out). It carries out the reaction Ca(2+)(in) = Ca(2+)(out). It catalyses the reaction Mg(2+)(in) = Mg(2+)(out). Functionally, forms serotonin (5-hydroxytryptamine/5-HT3)-activated cation-selective channel complexes, which when activated cause fast, depolarizing responses in neurons. The protein is 5-hydroxytryptamine receptor 3A of Rattus norvegicus (Rat).